We begin with the raw amino-acid sequence, 147 residues long: Bis(5'-nucleosyl)-tetraphosphatase [asymmetrical] (147 aa).

Position 2 is an N-acetylalanine (Ala-2). A Nudix hydrolase domain is found at 2–139 (ALRACGLIIF…DMKAVLQEGH (138 aa)). Residues 43–64 (GHVEPGESDLQTALRETQEEAG) carry the Nudix box motif.

Belongs to the Nudix hydrolase family. It depends on a divalent metal cation as a cofactor.

The enzyme catalyses P(1),P(4)-bis(5'-guanosyl) tetraphosphate + H2O = GMP + GTP + 2 H(+). It carries out the reaction a 5'-end CoA-ribonucleoside in mRNA + H2O = a 5'-end phospho-adenosine-phospho-ribonucleoside in mRNA + (R)-4'-phosphopantetheine + 2 H(+). The catalysed reaction is a 5'-end FAD-phospho-ribonucleoside in mRNA + H2O = a 5'-end phospho-adenosine-phospho-ribonucleoside in mRNA + FMN + 2 H(+). With respect to regulation, inhibited by fluoride ions. Functionally, catalyzes the asymmetric hydrolysis of diadenosine 5',5'''-P1,P4-tetraphosphate (Ap4A) to yield AMP and ATP. Exhibits decapping activity towards FAD-capped RNAs and dpCoA-capped RNAs in vitro. This is Bis(5'-nucleosyl)-tetraphosphatase [asymmetrical] (NUDT2) from Sus scrofa (Pig).